A 239-amino-acid chain; its full sequence is Uridylate kinase (239 aa).

13–16 (KLSG) provides a ligand contact to ATP. Glycine 55 contacts UMP. Residues glycine 56 and arginine 60 each contribute to the ATP site. Residues aspartate 75 and 136-143 (TGNPFFTT) each bind UMP. Positions 163, 164, 169, and 172 each coordinate ATP.

The protein belongs to the UMP kinase family. Homohexamer.

It localises to the cytoplasm. It catalyses the reaction UMP + ATP = UDP + ADP. It participates in pyrimidine metabolism; CTP biosynthesis via de novo pathway; UDP from UMP (UMPK route): step 1/1. Its activity is regulated as follows. Inhibited by UTP. Its function is as follows. Catalyzes the reversible phosphorylation of UMP to UDP. In Neisseria gonorrhoeae (strain ATCC 700825 / FA 1090), this protein is Uridylate kinase.